Consider the following 209-residue polypeptide: Large ribosomal subunit protein uL3 (209 aa).

A disordered region spans residues 128–166 (FGGGSRTHGQSDRLRAPGSVGGSSDPSRTFKGTRMAGRM).

It belongs to the universal ribosomal protein uL3 family. In terms of assembly, part of the 50S ribosomal subunit. Forms a cluster with proteins L14 and L19.

One of the primary rRNA binding proteins, it binds directly near the 3'-end of the 23S rRNA, where it nucleates assembly of the 50S subunit. The polypeptide is Large ribosomal subunit protein uL3 (Chlorobaculum parvum (strain DSM 263 / NCIMB 8327) (Chlorobium vibrioforme subsp. thiosulfatophilum)).